The chain runs to 260 residues: Ribosomal RNA small subunit methyltransferase J (260 aa).

S-adenosyl-L-methionine-binding positions include 125 to 126 (ER) and Asp-179.

Belongs to the methyltransferase superfamily. RsmJ family.

The protein localises to the cytoplasm. The enzyme catalyses guanosine(1516) in 16S rRNA + S-adenosyl-L-methionine = N(2)-methylguanosine(1516) in 16S rRNA + S-adenosyl-L-homocysteine + H(+). Specifically methylates the guanosine in position 1516 of 16S rRNA. The sequence is that of Ribosomal RNA small subunit methyltransferase J from Pseudomonas fluorescens (strain Pf0-1).